Here is a 96-residue protein sequence, read N- to C-terminus: Neutrophil defensin 1 (96 aa).

An N-terminal signal peptide occupies residues 1–19; the sequence is MRTLVILAAILLVALQAQA. A propeptide spanning residues 20–66 is cleaved from the precursor; it reads EPLQARTDEATAAQEQIPTDNPEVVVSLAWDESLAPKDSVPGLRKNM. 3 cysteine pairs are disulfide-bonded: cysteine 68-cysteine 96, cysteine 70-cysteine 85, and cysteine 75-cysteine 95. Tyrosine 87 is modified (phosphotyrosine).

As to quaternary structure, tetramer. Dimer. Interacts with RETN. ADP-ribosylation drastically reduces cytotoxic and antibacterial activities, and enhances IL8 production.

It localises to the secreted. Effector molecule of the innate immune system that acts via antibiotic-like properties against a broad array of infectious agents including bacteria, fungi, and viruses or by promoting the activation and maturation of some APCs. Interacts with the essential precursor of cell wall synthesis lipid II to inhibit bacterial cell wall synthesis. Inhibits adenovirus infection via inhibition of viral disassembly at the vertex region, thereby restricting the release of internal capsid protein pVI, which is required for endosomal membrane penetration during cell entry. In addition, interaction with adenovirus capsid leads to the redirection of viral particles to TLR4 thereby promoting a NLRP3-mediated inflammasome response and interleukin 1-beta (IL-1beta) release. Induces the production of proinflammatory cytokines including type I interferon (IFN) in plasmacytoid dendritic cells (pDCs) by triggering the degradation of NFKBIA and nuclear translocation of IRF1, both of which are required for activation of pDCs. The polypeptide is Neutrophil defensin 1 (Macaca mulatta (Rhesus macaque)).